Consider the following 217-residue polypeptide: Uracil-DNA glycosylase (217 aa).

Residue aspartate 62 is the Proton acceptor of the active site.

The protein belongs to the uracil-DNA glycosylase (UDG) superfamily. UNG family.

The protein localises to the cytoplasm. The catalysed reaction is Hydrolyzes single-stranded DNA or mismatched double-stranded DNA and polynucleotides, releasing free uracil.. Functionally, excises uracil residues from the DNA which can arise as a result of misincorporation of dUMP residues by DNA polymerase or due to deamination of cytosine. This is Uracil-DNA glycosylase from Streptococcus pneumoniae (strain JJA).